Reading from the N-terminus, the 397-residue chain is Enoyl-[acyl-carrier-protein] reductase [NADH] (397 aa).

Residues 48 to 53, 74 to 75, 111 to 112, and 139 to 140 each bind NAD(+); these read GASTGY, LE, DA, and LA. Tyr225 contributes to the substrate binding site. Tyr235 (proton donor) is an active-site residue. Residues Lys244 and 273–275 each bind NAD(+); that span reads VVT.

It belongs to the TER reductase family. In terms of assembly, monomer.

The catalysed reaction is a 2,3-saturated acyl-[ACP] + NAD(+) = a (2E)-enoyl-[ACP] + NADH + H(+). Its pathway is lipid metabolism; fatty acid biosynthesis. Functionally, involved in the final reduction of the elongation cycle of fatty acid synthesis (FAS II). Catalyzes the reduction of a carbon-carbon double bond in an enoyl moiety that is covalently linked to an acyl carrier protein (ACP). This Tolumonas auensis (strain DSM 9187 / NBRC 110442 / TA 4) protein is Enoyl-[acyl-carrier-protein] reductase [NADH].